Here is a 284-residue protein sequence, read N- to C-terminus: tRNA uridine(34) hydroxylase (284 aa).

The 95-residue stretch at 132-226 (AGRPVVMLDT…YFEEVGGAHY (95 aa)) folds into the Rhodanese domain. Cysteine 186 functions as the Cysteine persulfide intermediate in the catalytic mechanism.

The protein belongs to the TrhO family.

The catalysed reaction is uridine(34) in tRNA + AH2 + O2 = 5-hydroxyuridine(34) in tRNA + A + H2O. Its function is as follows. Catalyzes oxygen-dependent 5-hydroxyuridine (ho5U) modification at position 34 in tRNAs. The protein is tRNA uridine(34) hydroxylase of Burkholderia ambifaria (strain MC40-6).